The following is a 747-amino-acid chain: Pyrin (747 aa).

In terms of domain architecture, Pyrin spans 1-92; it reads MANTRVDHLL…AEELHKATGP (92 aa). The segment at 89–181 is disordered; it reads ATGPEHLTEE…GARSAAPLYR (93 aa). A compositionally biased stretch (acidic residues) spans 122 to 135; that stretch reads PGEDEAQQNDDESD. Zn(2+) is bound by residues C442, H445, C465, and H471. The segment at 442 to 479 adopts a B box-type zinc-finger fold; sequence CPRHMKQVQLLFCEDHREPICLICRLSQEHQGHRVRPI. Residues 479 to 508 are a coiled coil; sequence IEEAALQYKEQIRKQLERLREMRGYVEEHK. The segment at 487–645 is required for homotrimerization and induction of pyroptosomes; that stretch reads KEQIRKQLER…RFSEMLGSEM (159 aa). Residues 698–720 are disordered; that stretch reads EPQDYLHPSSAQDTPELHEIHSQ.

As to quaternary structure, homotrimer. Interacts (via the B box-type zinc finger) with PSTPIP1. Interacts (via the B30.2/SPRY domain) with several components of the inflammasome complex, including CASP1 p20 and p10 subunits, CASP5, PYCARD, NLRP1, NLRP2 and NLRP3, as well as with unprocessed IL1B; this interaction may lead to autophagic degradation of these proteins. Component of the AIM2 PANoptosome complex, a multiprotein complex that drives inflammatory cell death (PANoptosis). Interacts with NFKBIA and RELA. Interacts weakly with VASP and ACTR3. Interacts with active ULK1 (phosphorylated on 'Ser-317') and BECN1 simultaneously. Also interacts with ATG16L1 (via WD repeats), and with ATG8 family members, including GABARAP, GABARAPL1 and, to a lesser extent, GABARAPL2, MAP1LC3A/LC3A and MAP1LC3C/LC3C. Interacts with TRIM21. Interacts with YWHAB, YWHAE, YWHAG, YWHAH, YWHAQ and YWHAZ; the interaction is required for the down-regulation of pyrin pro-inflammatory activity. Post-translationally, degraded along with the delivery of its substrates to autolysosomal compartments (at protein level). Expressed in spleen and, to a lesser degree in the lung. Not expressed in thymus, testis, ovary, heart, brain, liver, kidney and muscle.

The protein resides in the cytoplasm. It is found in the cytoskeleton. It localises to the cell projection. Its subcellular location is the ruffle. The protein localises to the lamellipodium. The protein resides in the cytoplasmic vesicle. It is found in the autophagosome. It localises to the nucleus. In terms of biological role, involved in the regulation of innate immunity and the inflammatory response in response to IFNG/IFN-gamma. Organizes autophagic machinery by serving as a platform for the assembly of ULK1, Beclin 1/BECN1, ATG16L1, and ATG8 family members and recognizes specific autophagy targets, thus coordinating target recognition with assembly of the autophagic apparatus and initiation of autophagy. Acts as an autophagy receptor for the degradation of several inflammasome components, including CASP1, NLRP1 and NLRP3, hence preventing excessive IL1B- and IL18-mediated inflammation. However, it can also have a positive effect in the inflammatory pathway, acting as an innate immune sensor that triggers PYCARD/ASC specks formation, caspase-1 activation, and IL1B and IL18 production. Together with AIM2, also acts as a mediator of pyroptosis, necroptosis and apoptosis (PANoptosis), an integral part of host defense against pathogens, in response to bacterial infection. It is required for PSTPIP1-induced PYCARD/ASC oligomerization and inflammasome formation. Recruits PSTPIP1 to inflammasomes, and is required for PSTPIP1 oligomerization. The chain is Pyrin from Rattus norvegicus (Rat).